The primary structure comprises 485 residues: N-succinylglutamate 5-semialdehyde dehydrogenase (485 aa).

220 to 225 (GSANTG) is a binding site for NAD(+). Residues Glu243 and Cys278 contribute to the active site.

The protein belongs to the aldehyde dehydrogenase family. AstD subfamily.

The catalysed reaction is N-succinyl-L-glutamate 5-semialdehyde + NAD(+) + H2O = N-succinyl-L-glutamate + NADH + 2 H(+). Its pathway is amino-acid degradation; L-arginine degradation via AST pathway; L-glutamate and succinate from L-arginine: step 4/5. Catalyzes the NAD-dependent reduction of succinylglutamate semialdehyde into succinylglutamate. This chain is N-succinylglutamate 5-semialdehyde dehydrogenase, found in Aliivibrio fischeri (strain ATCC 700601 / ES114) (Vibrio fischeri).